An 889-amino-acid chain; its full sequence is DNA mismatch repair protein MutS (889 aa).

641 to 648 (GPNMAGKS) lines the ATP pocket.

This sequence belongs to the DNA mismatch repair MutS family.

In terms of biological role, this protein is involved in the repair of mismatches in DNA. It is possible that it carries out the mismatch recognition step. This protein has a weak ATPase activity. The polypeptide is DNA mismatch repair protein MutS (Orientia tsutsugamushi (strain Ikeda) (Rickettsia tsutsugamushi)).